The sequence spans 83 residues: Early lactation protein (83 aa).

N-linked (GlcNAc...) asparagine glycans are attached at residues Asn14, Asn31, and Asn42. Residues Cys23 to Cys73 enclose the BPTI/Kunitz inhibitor domain. 3 disulfide bridges follow: Cys23–Cys73, Cys32–Cys56, and Cys48–Cys69.

Post-translationally, N-glycosylated. Found in the whey fraction of milk.

Its subcellular location is the secreted. This Notamacropus eugenii (Tammar wallaby) protein is Early lactation protein (ELP).